Reading from the N-terminus, the 78-residue chain is Large ribosomal subunit protein bL28 (78 aa).

The interval 1 to 33 is disordered; that stretch reads MARKDDVTGEGPVTGNSVSDSNQKTNRRFKRNL. The span at 14-24 shows a compositional bias: polar residues; it reads TGNSVSDSNQK.

It belongs to the bacterial ribosomal protein bL28 family.

This chain is Large ribosomal subunit protein bL28, found in Salinibacter ruber (strain DSM 13855 / M31).